The sequence spans 183 residues: Inosine/xanthosine triphosphatase (183 aa).

Residue Asp-75 participates in Mg(2+) binding. 75–76 contacts substrate; sequence DG.

Belongs to the YjjX NTPase family. In terms of assembly, homodimer. Requires Mg(2+) as cofactor. It depends on Mn(2+) as a cofactor.

It catalyses the reaction XTP + H2O = XDP + phosphate + H(+). The catalysed reaction is ITP + H2O = IDP + phosphate + H(+). Phosphatase that hydrolyzes non-canonical purine nucleotides such as XTP and ITP to their respective diphosphate derivatives. Probably excludes non-canonical purines from DNA/RNA precursor pool, thus preventing their incorporation into DNA/RNA and avoiding chromosomal lesions. This is Inosine/xanthosine triphosphatase from Vibrio vulnificus (strain YJ016).